The following is a 323-amino-acid chain: Fructose-1,6-bisphosphatase class 1 (323 aa).

Residues Glu88, Asp107, Leu109, and Asp110 each coordinate Mg(2+). Residues 110 to 113 (DGSS) and Asn200 contribute to the substrate site. Glu272 contributes to the Mg(2+) binding site.

It belongs to the FBPase class 1 family. As to quaternary structure, homotetramer. Mg(2+) is required as a cofactor.

Its subcellular location is the cytoplasm. The enzyme catalyses beta-D-fructose 1,6-bisphosphate + H2O = beta-D-fructose 6-phosphate + phosphate. Its pathway is carbohydrate biosynthesis; gluconeogenesis. This chain is Fructose-1,6-bisphosphatase class 1, found in Acinetobacter baumannii (strain AYE).